Reading from the N-terminus, the 336-residue chain is Fructose-1,6-bisphosphatase class 1 (336 aa).

The Mg(2+) site is built by Glu90, Asp112, Leu114, and Asp115. Residues 115–118 (DGSS), Asn211, and Lys277 each bind substrate. Mg(2+) is bound at residue Glu283.

Belongs to the FBPase class 1 family. In terms of assembly, homotetramer. It depends on Mg(2+) as a cofactor.

Its subcellular location is the cytoplasm. The enzyme catalyses beta-D-fructose 1,6-bisphosphate + H2O = beta-D-fructose 6-phosphate + phosphate. It participates in carbohydrate biosynthesis; gluconeogenesis. This chain is Fructose-1,6-bisphosphatase class 1, found in Pseudomonas aeruginosa (strain UCBPP-PA14).